A 247-amino-acid chain; its full sequence is ATP synthase subunit a (247 aa).

The next 6 membrane-spanning stretches (helical) occupy residues 24 to 44, 82 to 102, 112 to 132, 141 to 161, 194 to 214, and 219 to 239; these read IAFT…SLLM, FFPF…VGIV, IIVT…YGFY, LFVP…IEVI, MLGA…ALVV, and LELL…CIYI.

This sequence belongs to the ATPase A chain family. F-type ATPases have 2 components, CF(1) - the catalytic core - and CF(0) - the membrane proton channel. CF(1) has five subunits: alpha(3), beta(3), gamma(1), delta(1), epsilon(1). CF(0) has three main subunits: a(1), b(2) and c(9-12). The alpha and beta chains form an alternating ring which encloses part of the gamma chain. CF(1) is attached to CF(0) by a central stalk formed by the gamma and epsilon chains, while a peripheral stalk is formed by the delta and b chains.

Its subcellular location is the cell inner membrane. Its function is as follows. Key component of the proton channel; it plays a direct role in the translocation of protons across the membrane. This Nitrobacter hamburgensis (strain DSM 10229 / NCIMB 13809 / X14) protein is ATP synthase subunit a.